A 279-amino-acid chain; its full sequence is MKIIRTLFLLLIAVYGSSVVAKPMLKATFSSTTMYYGIGPNSDKSIVAEVTIATPEGVYYGSWNLSGHRKGETLTADSWSGPEPAPKVVLKDFDNTVSRSACKNLPSNWRGCGSFTLEITVQSDDYGCPWLASSHIVATTFITNETYSPPDTRSSVCPKVPVDTFDISWDANVSKQKTTLMLDATGGTVNRTLHTYLMEGGKLCDGSKFDNRGAYCRFVSSGITLNVLGCDQSSVTTSAVDHPITDVELHDINVAVNTRNIGSGQFTSTCSFQYIIDEL.

The first 21 residues, 1 to 21 (MKIIRTLFLLLIAVYGSSVVA), serve as a signal peptide directing secretion.

To E.coli YfcO.

This is an uncharacterized protein from Salmonella typhimurium (strain LT2 / SGSC1412 / ATCC 700720).